The primary structure comprises 782 residues: Beta-mannosyltransferase 9 (782 aa).

At Met1–Ser26 the chain is on the cytoplasmic side. A helical membrane pass occupies residues Ile27–Val47. The Extracellular segment spans residues Tyr48–Asn782. The tract at residues Lys66–Gln96 is disordered. Positions Gln76–Gln96 are enriched in basic and acidic residues. 3 N-linked (GlcNAc...) asparagine glycosylation sites follow: Asn445, Asn648, and Asn699.

This sequence belongs to the BMT family.

It is found in the membrane. In terms of biological role, beta-mannosyltransferase involved in cell wall biosynthesis through beta-1,2-mannosylation of cell wall phosphopeptidomannan. This Candida albicans (strain SC5314 / ATCC MYA-2876) (Yeast) protein is Beta-mannosyltransferase 9 (BMT9).